A 156-amino-acid polypeptide reads, in one-letter code: Protein eva-1 homolog A (156 aa).

A helical transmembrane segment spans residues 40-60 (ALYFVSGVCIGLFLTLAALVM). Positions 79–100 (DRECSDSSDSEDGSEDTASDLS) are disordered. Acidic residues predominate over residues 84 to 96 (DSSDSEDGSEDTA). T110 is subject to Phosphothreonine. S118 is modified (phosphoserine).

This sequence belongs to the EVA1 family.

The protein localises to the endoplasmic reticulum membrane. It is found in the lysosome membrane. Its function is as follows. Acts as a regulator of programmed cell death, mediating both autophagy and apoptosis. In Mus musculus (Mouse), this protein is Protein eva-1 homolog A (Eva1a).